The sequence spans 205 residues: Thymidylate kinase (205 aa).

10 to 17 (GLEGAGKS) contacts ATP.

The protein belongs to the thymidylate kinase family.

The catalysed reaction is dTMP + ATP = dTDP + ADP. Its function is as follows. Phosphorylation of dTMP to form dTDP in both de novo and salvage pathways of dTTP synthesis. In Idiomarina loihiensis (strain ATCC BAA-735 / DSM 15497 / L2-TR), this protein is Thymidylate kinase.